Reading from the N-terminus, the 945-residue chain is Oxysterol-binding protein homolog C23H4.01c (945 aa).

Positions 1–131 (METVEIRSKS…PKTVTFLLTA (131 aa)) constitute a GOLD domain. One can recognise a PH domain in the interval 149-243 (KQIISGTLLK…WCNALEKAKN (95 aa)). Phosphoserine is present on residues Ser-288, Ser-419, and Ser-421. 2 disordered regions span residues 396–555 (ESGA…LPHS) and 846–894 (LEKD…MEEK). The span at 443-454 (TSSISDTSSNSS) shows a compositional bias: low complexity. The segment covering 460-470 (LNATSLASTVD) has biased composition (polar residues). Basic and acidic residues predominate over residues 482–499 (ESNKENDIKRKQPFHDLM). The residue at position 503 (Ser-503) is a Phosphoserine.

It belongs to the OSBP family.

The protein localises to the cytoplasm. In Schizosaccharomyces pombe (strain 972 / ATCC 24843) (Fission yeast), this protein is Oxysterol-binding protein homolog C23H4.01c.